A 128-amino-acid chain; its full sequence is Fluoride-specific ion channel FluC (128 aa).

Helical transmembrane passes span 5-25 (IVAIFVGAGFGAVLRWFLALA), 35-55 (LGTLAANLIGGYVIGVAAVVF), 67-87 (LFVITGFLGGLTTFSTYSVEV), and 96-116 (FGWAIAVAALHLTGSFTLTAL). 2 residues coordinate Na(+): Gly-75 and Thr-78.

It belongs to the fluoride channel Fluc/FEX (TC 1.A.43) family.

It is found in the cell inner membrane. It carries out the reaction fluoride(in) = fluoride(out). Na(+) is not transported, but it plays an essential structural role and its presence is essential for fluoride channel function. Fluoride-specific ion channel. Important for reducing fluoride concentration in the cell, thus reducing its toxicity. The chain is Fluoride-specific ion channel FluC from Burkholderia ambifaria (strain MC40-6).